Consider the following 449-residue polypeptide: Adenosylhomocysteinase (449 aa).

Residue Ser2 is modified to N-acetylserine. A Glycyl lysine isopeptide (Lys-Gly) (interchain with G-Cter in ubiquitin) cross-link involves residue Lys21. Substrate is bound by residues Thr58, Asp134, and Glu159. 160–162 (TTT) is a binding site for NAD(+). Substrate contacts are provided by Lys189 and Asp193. Residues Asn194, 223–228 (GYGDVG), Glu246, 302–304 (IGH), and Asn349 contribute to the NAD(+) site. Phosphothreonine is present on Thr393. A Glycyl lysine isopeptide (Lys-Gly) (interchain with G-Cter in ubiquitin) cross-link involves residue Lys413.

It belongs to the adenosylhomocysteinase family. It depends on NAD(+) as a cofactor.

It carries out the reaction S-adenosyl-L-homocysteine + H2O = L-homocysteine + adenosine. Its pathway is amino-acid biosynthesis; L-homocysteine biosynthesis; L-homocysteine from S-adenosyl-L-homocysteine: step 1/1. In terms of biological role, adenosylhomocysteine is a competitive inhibitor of S-adenosyl-L-methionine-dependent methyl transferase reactions; therefore adenosylhomocysteinase may play a key role in the control of methylations via regulation of the intracellular concentration of adenosylhomocysteine. This chain is Adenosylhomocysteinase (SAH1), found in Saccharomyces cerevisiae (strain ATCC 204508 / S288c) (Baker's yeast).